The following is a 277-amino-acid chain: Formamidopyrimidine-DNA glycosylase (277 aa).

Pro2 (schiff-base intermediate with DNA) is an active-site residue. Residue Glu3 is the Proton donor of the active site. Lys60 serves as the catalytic Proton donor; for beta-elimination activity. DNA contacts are provided by His94, Arg113, and Arg156. Residues 241-275 (KVYNREGLPCPHCGKPIQRIKVAGRSSYYCSSCQK) form an FPG-type zinc finger. Residue Arg265 is the Proton donor; for delta-elimination activity of the active site.

This sequence belongs to the FPG family. In terms of assembly, monomer. Zn(2+) serves as cofactor.

The catalysed reaction is Hydrolysis of DNA containing ring-opened 7-methylguanine residues, releasing 2,6-diamino-4-hydroxy-5-(N-methyl)formamidopyrimidine.. It catalyses the reaction 2'-deoxyribonucleotide-(2'-deoxyribose 5'-phosphate)-2'-deoxyribonucleotide-DNA = a 3'-end 2'-deoxyribonucleotide-(2,3-dehydro-2,3-deoxyribose 5'-phosphate)-DNA + a 5'-end 5'-phospho-2'-deoxyribonucleoside-DNA + H(+). Functionally, involved in base excision repair of DNA damaged by oxidation or by mutagenic agents. Acts as a DNA glycosylase that recognizes and removes damaged bases. Has a preference for oxidized purines, such as 7,8-dihydro-8-oxoguanine (8-oxoG). Has AP (apurinic/apyrimidinic) lyase activity and introduces nicks in the DNA strand. Cleaves the DNA backbone by beta-delta elimination to generate a single-strand break at the site of the removed base with both 3'- and 5'-phosphates. The sequence is that of Formamidopyrimidine-DNA glycosylase from Desulforamulus reducens (strain ATCC BAA-1160 / DSM 100696 / MI-1) (Desulfotomaculum reducens).